Consider the following 396-residue polypeptide: Ribosomal RNA large subunit methyltransferase I (396 aa).

The PUA domain occupies 2–81; that stretch reads SVRLVLAKGR…ESIDIAFFSR (80 aa).

Belongs to the methyltransferase superfamily. RlmI family.

It is found in the cytoplasm. The catalysed reaction is cytidine(1962) in 23S rRNA + S-adenosyl-L-methionine = 5-methylcytidine(1962) in 23S rRNA + S-adenosyl-L-homocysteine + H(+). Functionally, specifically methylates the cytosine at position 1962 (m5C1962) of 23S rRNA. In Escherichia coli (strain K12 / MC4100 / BW2952), this protein is Ribosomal RNA large subunit methyltransferase I.